The primary structure comprises 402 residues: Imidazolonepropionase (402 aa).

Fe(3+)-binding residues include His-66 and His-68. Zn(2+) is bound by residues His-66 and His-68. 4-imidazolone-5-propanoate-binding residues include Arg-75, Tyr-138, and His-171. Tyr-138 provides a ligand contact to N-formimidoyl-L-glutamate. His-236 is a Fe(3+) binding site. His-236 is a binding site for Zn(2+). A 4-imidazolone-5-propanoate-binding site is contributed by Gln-239. Position 311 (Asp-311) interacts with Fe(3+). Asp-311 lines the Zn(2+) pocket. Asn-313 and Gly-315 together coordinate N-formimidoyl-L-glutamate. Thr-316 is a 4-imidazolone-5-propanoate binding site.

This sequence belongs to the metallo-dependent hydrolases superfamily. HutI family. It depends on Zn(2+) as a cofactor. The cofactor is Fe(3+).

The protein resides in the cytoplasm. The catalysed reaction is 4-imidazolone-5-propanoate + H2O = N-formimidoyl-L-glutamate. Its pathway is amino-acid degradation; L-histidine degradation into L-glutamate; N-formimidoyl-L-glutamate from L-histidine: step 3/3. Functionally, catalyzes the hydrolytic cleavage of the carbon-nitrogen bond in imidazolone-5-propanoate to yield N-formimidoyl-L-glutamate. It is the third step in the universal histidine degradation pathway. The chain is Imidazolonepropionase from Vibrio cholerae serotype O1 (strain ATCC 39541 / Classical Ogawa 395 / O395).